A 320-amino-acid polypeptide reads, in one-letter code: tRNA uridine(34) hydroxylase (320 aa).

In terms of domain architecture, Rhodanese spans 123–217; sequence EDENTVILDA…YGKDPETKGQ (95 aa). Residue Cys177 is the Cysteine persulfide intermediate of the active site.

The protein belongs to the TrhO family.

It catalyses the reaction uridine(34) in tRNA + AH2 + O2 = 5-hydroxyuridine(34) in tRNA + A + H2O. Its function is as follows. Catalyzes oxygen-dependent 5-hydroxyuridine (ho5U) modification at position 34 in tRNAs. The polypeptide is tRNA uridine(34) hydroxylase (Staphylococcus epidermidis (strain ATCC 12228 / FDA PCI 1200)).